The following is a 196-amino-acid chain: Large ribosomal subunit protein bL20 (196 aa).

The protein belongs to the bacterial ribosomal protein bL20 family.

In terms of biological role, binds directly to 23S ribosomal RNA and is necessary for the in vitro assembly process of the 50S ribosomal subunit. It is not involved in the protein synthesizing functions of that subunit. This Oenococcus oeni (strain ATCC BAA-331 / PSU-1) protein is Large ribosomal subunit protein bL20 (rplT).